The sequence spans 364 residues: UDP-N-acetylenolpyruvoylglucosamine reductase (364 aa).

Residues 30–196 (LGGPATRLIT…LRVRFELEDA (167 aa)) form the FAD-binding PCMH-type domain. The active site involves Arg173. Ser252 serves as the catalytic Proton donor. Glu356 is an active-site residue.

It belongs to the MurB family. Requires FAD as cofactor.

The protein resides in the cytoplasm. The enzyme catalyses UDP-N-acetyl-alpha-D-muramate + NADP(+) = UDP-N-acetyl-3-O-(1-carboxyvinyl)-alpha-D-glucosamine + NADPH + H(+). The protein operates within cell wall biogenesis; peptidoglycan biosynthesis. In terms of biological role, cell wall formation. The sequence is that of UDP-N-acetylenolpyruvoylglucosamine reductase from Streptomyces avermitilis (strain ATCC 31267 / DSM 46492 / JCM 5070 / NBRC 14893 / NCIMB 12804 / NRRL 8165 / MA-4680).